A 343-amino-acid chain; its full sequence is Histone H1.8 (343 aa).

Over residues 1–32 (MAPGSIASSDTSSSTSSSSTSSASSASAEGSS) the composition is skewed to low complexity. Disordered regions lie at residues 1-50 (MAPG…VRAP) and 122-343 (ATGS…EAEG). Residues 52-130 (RHPPVLRMVL…GATGSFKLVP (79 aa)) form the H15 domain. The segment covering 132–142 (DKRKIPPRKTA) has biased composition (basic residues). 3 stretches are compositionally biased toward basic and acidic residues: residues 150–183 (EGKDPKKPSESKKDPANTVEVKKGSRKPREERAA), 199–219 (QTKDPEPRLGEAKKSSRRPDK), and 235–247 (KVKERGSRQADTK). A Nuclear localization signal motif is present at residues 161-176 (KKDPANTVEVKKGSRK). Residues 253–265 (QPGSQSSKSTVTK) show a composition bias toward polar residues.

It belongs to the histone H1/H5 family. Oocyte (at protein level).

It is found in the cytoplasm. Its subcellular location is the nucleus. The protein resides in the chromosome. In terms of biological role, may play a key role in the control of gene expression during oogenesis and early embryogenesis, presumably through the perturbation of chromatin structure. Essential for meiotic maturation of germinal vesicle-stage oocytes. The somatic type linker histone H1c is rapidly replaced by H1oo in a donor nucleus transplanted into an oocyte. The greater mobility of H1oo as compared to H1c may contribute to this rapid replacement and increased instability of the embryonic chromatin structure. The rapid replacement of H1c with H1oo may play an important role in nuclear remodeling. The protein is Histone H1.8 of Bos taurus (Bovine).